The primary structure comprises 175 residues: MVKYSQEPDNQTKSCKARGSDLRVHFKNTRETAHAIRKLPLIKAKRYLEDVIAHKQAIPFTRFCRGVGRTAQAKNRHSNGQGRWPAKSAQFVLDLLKNAESNAEVKGLDVDALFISHIQVNQAAKQRRRTYRAHGRINPYMSNPCHIELILSEKEEPVKKEPETQLAAKSKKSAA.

The span at 153–163 (EKEEPVKKEPE) shows a compositional bias: basic and acidic residues. The segment at 153–175 (EKEEPVKKEPETQLAAKSKKSAA) is disordered.

It belongs to the universal ribosomal protein uL22 family.

In Arabidopsis thaliana (Mouse-ear cress), this protein is Large ribosomal subunit protein uL22y (RPL17B).